Here is a 194-residue protein sequence, read N- to C-terminus: Peroxynitrite isomerase 1 (194 aa).

Positions 40-46 match the GXWXGXG motif; it reads GVWRGEG. 2 residues coordinate heme b: Lys-157 and His-184.

Belongs to the nitrobindin family. As to quaternary structure, homodimer. Requires heme b as cofactor.

It catalyses the reaction peroxynitrite = nitrate. It functions in the pathway nitrogen metabolism. Functionally, heme-binding protein able to scavenge peroxynitrite and to protect free L-tyrosine against peroxynitrite-mediated nitration, by acting as a peroxynitrite isomerase that converts peroxynitrite to nitrate. Therefore, this protein likely plays a role in peroxynitrite sensing and in the detoxification of reactive nitrogen and oxygen species (RNS and ROS, respectively). Is able to bind nitric oxide (NO) in vitro, but may act as a sensor of peroxynitrite levels in vivo. This chain is Peroxynitrite isomerase 1, found in Mycobacterium ulcerans (strain Agy99).